A 103-amino-acid chain; its full sequence is UPF0473 protein LBA0420 (103 aa).

This sequence belongs to the UPF0473 family.

This Lactobacillus acidophilus (strain ATCC 700396 / NCK56 / N2 / NCFM) protein is UPF0473 protein LBA0420.